The primary structure comprises 157 residues: Transcriptional repressor NrdR (157 aa).

A zinc finger spans residues cysteine 3–cysteine 34. The 91-residue stretch at leucine 49–glutamine 139 folds into the ATP-cone domain.

This sequence belongs to the NrdR family. Zn(2+) is required as a cofactor.

Negatively regulates transcription of bacterial ribonucleotide reductase nrd genes and operons by binding to NrdR-boxes. The polypeptide is Transcriptional repressor NrdR (Staphylococcus carnosus (strain TM300)).